A 401-amino-acid polypeptide reads, in one-letter code: Nodal homolog 3-A (401 aa).

An N-terminal signal peptide occupies residues 1–18; it reads MAFLNLFFCLVFISPLMA. Positions 19–274 are excised as a propeptide; sequence MPPVLQGRKS…KVNGFRRLRR (256 aa). N-linked (GlcNAc...) asparagine glycans are attached at residues Asn-168, Asn-337, Asn-341, and Asn-344. Intrachain disulfides connect Cys-299-Cys-365 and Cys-328-Cys-396.

The protein belongs to the TGF-beta family. As to quaternary structure, monomer. The propeptide region interacts with bmp4 in a non-covalent manner. As to expression, expressed in the epithelial layer of the Spemann organizer during gastrulation.

The protein resides in the secreted. Exhibits mesoderm-dorsalizing activity and neural-inducing activity, but lacks mesoderm-inducing activity. Regulates the expression of specific mesodermal and neural genes. Induces convergent extension movements at the embryonic midline by activating the fgf signaling pathway to induce t/bra expression in the organizer region. Acts with wnt11 to induce Spemann organizer cells and induce axis formation. The unprocessed protein antagonizes bmp-signaling. The chain is Nodal homolog 3-A (nodal3-a) from Xenopus laevis (African clawed frog).